Here is a 659-residue protein sequence, read N- to C-terminus: DNA ligase (659 aa).

NAD(+) is bound by residues 31-35 (DFVYD), 80-81 (SL), and Glu109. The active-site N6-AMP-lysine intermediate is the Lys111. NAD(+) is bound by residues Arg132, Glu166, Lys281, and Lys305. Cys398, Cys401, Cys416, and Cys421 together coordinate Zn(2+). The BRCT domain occupies 581–659 (VTTHPFNGKT…EATFKVKINE (79 aa)).

It belongs to the NAD-dependent DNA ligase family. LigA subfamily. Mg(2+) is required as a cofactor. It depends on Mn(2+) as a cofactor.

It carries out the reaction NAD(+) + (deoxyribonucleotide)n-3'-hydroxyl + 5'-phospho-(deoxyribonucleotide)m = (deoxyribonucleotide)n+m + AMP + beta-nicotinamide D-nucleotide.. Its function is as follows. DNA ligase that catalyzes the formation of phosphodiester linkages between 5'-phosphoryl and 3'-hydroxyl groups in double-stranded DNA using NAD as a coenzyme and as the energy source for the reaction. It is essential for DNA replication and repair of damaged DNA. In Acholeplasma laidlawii (strain PG-8A), this protein is DNA ligase.